Reading from the N-terminus, the 143-residue chain is MADNARAARMAKRIQQIVAVAIEREIKDPRLEYVTITDTRMTGDLHDASVFYTVRGASIDEEPDVPLAAAALESAKGQLRKIVGDQLSVRFTPTLSFVHDTVPEASAHMEKLLAEARAKDEAVRAQAAQAKPAGEANPYKERN.

The disordered stretch occupies residues 123-143; it reads VRAQAAQAKPAGEANPYKERN. Low complexity predominate over residues 124–136; it reads RAQAAQAKPAGEA.

It belongs to the RbfA family. In terms of assembly, monomer. Binds 30S ribosomal subunits, but not 50S ribosomal subunits or 70S ribosomes.

Its subcellular location is the cytoplasm. Its function is as follows. One of several proteins that assist in the late maturation steps of the functional core of the 30S ribosomal subunit. Associates with free 30S ribosomal subunits (but not with 30S subunits that are part of 70S ribosomes or polysomes). Required for efficient processing of 16S rRNA. May interact with the 5'-terminal helix region of 16S rRNA. In Corynebacterium urealyticum (strain ATCC 43042 / DSM 7109), this protein is Ribosome-binding factor A.